A 21-amino-acid polypeptide reads, in one-letter code: DYE-linked aldehyde dehydrogenase, gamma chain (21 aa).

In terms of assembly, heterotetramer composed of an alpha, a beta and two gamma chains. [2Fe-2S] cluster is required as a cofactor.

Its function is as follows. Active with aldehydes and formate esters as substrates. This chain is DYE-linked aldehyde dehydrogenase, gamma chain, found in Amycolatopsis methanolica.